Consider the following 307-residue polypeptide: Chaperone protein DnaJ 2 (307 aa).

One can recognise a J domain in the interval 6–71 (NYYQILGVPR…TKRRELDSRL (66 aa)). Positions 69-133 (SRLFGRFRRP…TRRTKVVSPA (65 aa)) are disordered. The span at 88 to 99 (NGGRSPNGTSVN) shows a compositional bias: polar residues. Over residues 100 to 114 (GQVRTPTGRTGTRQP) the composition is skewed to low complexity.

The protein belongs to the DnaJ family. Homodimer. Zn(2+) is required as a cofactor.

The protein resides in the cytoplasm. Participates actively in the response to hyperosmotic and heat shock by preventing the aggregation of stress-denatured proteins and by disaggregating proteins, also in an autonomous, DnaK-independent fashion. Unfolded proteins bind initially to DnaJ; upon interaction with the DnaJ-bound protein, DnaK hydrolyzes its bound ATP, resulting in the formation of a stable complex. GrpE releases ADP from DnaK; ATP binding to DnaK triggers the release of the substrate protein, thus completing the reaction cycle. Several rounds of ATP-dependent interactions between DnaJ, DnaK and GrpE are required for fully efficient folding. Also involved, together with DnaK and GrpE, in the DNA replication of plasmids through activation of initiation proteins. This is Chaperone protein DnaJ 2 (dnaJ2) from Synechocystis sp. (strain ATCC 27184 / PCC 6803 / Kazusa).